The chain runs to 207 residues: Uracil phosphoribosyltransferase (207 aa).

Residues arginine 77, arginine 102, and 129–137 (DPMLATGGS) each bind 5-phospho-alpha-D-ribose 1-diphosphate. Residues isoleucine 192 and 197 to 199 (GDA) contribute to the uracil site. Residue aspartate 198 coordinates 5-phospho-alpha-D-ribose 1-diphosphate.

Belongs to the UPRTase family. It depends on Mg(2+) as a cofactor.

The catalysed reaction is UMP + diphosphate = 5-phospho-alpha-D-ribose 1-diphosphate + uracil. The protein operates within pyrimidine metabolism; UMP biosynthesis via salvage pathway; UMP from uracil: step 1/1. With respect to regulation, allosterically activated by GTP. Catalyzes the conversion of uracil and 5-phospho-alpha-D-ribose 1-diphosphate (PRPP) to UMP and diphosphate. This Mycoplasma mobile (strain ATCC 43663 / 163K / NCTC 11711) (Mesomycoplasma mobile) protein is Uracil phosphoribosyltransferase.